We begin with the raw amino-acid sequence, 139 residues long: Putative nickel-responsive regulator (139 aa).

Ni(2+) contacts are provided by His79, His90, His92, and Cys98.

Belongs to the transcriptional regulatory CopG/NikR family. Requires Ni(2+) as cofactor.

Transcriptional regulator. In Trichlorobacter lovleyi (strain ATCC BAA-1151 / DSM 17278 / SZ) (Geobacter lovleyi), this protein is Putative nickel-responsive regulator.